The following is a 352-amino-acid chain: Alpha-2-HS-glycoprotein (352 aa).

A signal peptide spans 1–18 (MKSLVLLLCFAQLWSCQS). The region spanning 19 to 133 (APQGAGLGFR…QFRVLHAQCH (115 aa)) is the Cystatin fetuin-A-type 1 domain. 6 disulfides stabilise this stretch: C32–C343, C89–C100, C114–C132, C146–C149, C208–C219, and C230–C247. N99 carries N-linked (GlcNAc...) asparagine glycosylation. The residue at position 134 (S134) is a Phosphoserine. T135 carries the phosphothreonine modification. S138 carries the post-translational modification Phosphoserine. One can recognise a Cystatin fetuin-A-type 2 domain in the interval 144–250 (KFCPRCPILI…EEVSVACKLF (107 aa)). N156 and N176 each carry an N-linked (GlcNAc...) asparagine glycan. The segment covering 256-273 (PANANPAGPAPTVGQAAP) has biased composition (low complexity). The interval 256 to 280 (PANANPAGPAPTVGQAAPVAPPAGP) is disordered. 4 positions are modified to phosphoserine: S309, S313, S316, and S318. The interval 319–338 (GEVLHSPKVGQPGDAGAAGP) is disordered. Low complexity predominate over residues 328–338 (GQPGDAGAAGP).

This sequence belongs to the fetuin family. Undergoes complex post-translational modification involving N-glycosylation, and addition of fucose and sialic acid residues. Phosphorylation occurs at a serine residue. In terms of processing, phosphorylated by FAM20C in the extracellular medium. As to expression, synthesized in liver and secreted by the hepatocytes in the blood.

The protein localises to the secreted. In terms of biological role, could inhibit both insulin-receptor tyrosine kinase activity and insulin-stimulated receptor autophosphorylation and, concomitantly, antagonize the mitogenic effect of the hormone in cultured rat hepatoma cells. This Rattus norvegicus (Rat) protein is Alpha-2-HS-glycoprotein (Ahsg).